The following is a 2256-amino-acid chain: Death-inducer obliterator 1 (2256 aa).

Methionine 1 carries the N-acetylmethionine modification. Residues 1-25 (MDDKGHLSNEEAPKAIKPTSKEFRK) show a composition bias toward basic and acidic residues. The segment at 1–256 (MDDKGHLSNE…NPREAGKPKP (256 aa)) is disordered. Polar residues-rich tracts occupy residues 48-59 (SEQQPQQHNLSL) and 96-119 (EPTS…SSEI). Residues serine 58 and serine 112 each carry the phosphoserine modification. Over residues 128 to 142 (LGKEHPASSEKAKGG) the composition is skewed to basic and acidic residues. Positions 143–153 (EEEEDTSDSDS) are enriched in acidic residues. Threonine 148 is modified (phosphothreonine). 2 positions are modified to phosphoserine: serine 149 and serine 151. 2 short sequence motifs (nuclear localization signal) span residues 162 to 170 (QNRLRRKRE) and 182 to 190 (QNRLRKKRR). Basic and acidic residues predominate over residues 169–178 (REQEPVERSL). 2 stretches are compositionally biased toward basic and acidic residues: residues 206-216 (EQDRPLCKQEP) and 246-256 (ENPREAGKPKP). The PHD-type zinc-finger motif lies at 265 to 319 (ALYCICRQPHNNRFMICCDRCEEWFHGDCVGISEARGRLLERNGEDYICPNCTIL). Disordered regions lie at residues 481–535 (LASR…DDRR), 598–624 (RPWP…ASKK), 641–668 (ANVP…SQIR), 778–822 (SRTK…PEKS), 856–970 (QVPS…TALS), 1011–1039 (AKPS…PPEG), and 1197–1218 (PSSA…QEEL). Positions 495-506 (ESSTPSWASDHN) are enriched in polar residues. Phosphoserine is present on serine 522. The TFIIS central domain occupies 667 to 787 (IRQNIRRSLK…SRTKLLNESK (121 aa)). Positions 778-788 (SRTKLLNESKK) are enriched in basic and acidic residues. The segment covering 797–812 (PDMEDSPPVSDSEEQQ) has biased composition (acidic residues). Phosphoserine is present on residues serine 802 and serine 806. Composition is skewed to basic and acidic residues over residues 875 to 886 (SKKEDFKPRHDS) and 921 to 935 (QERK…DSHP). A Glycyl lysine isopeptide (Lys-Gly) (interchain with G-Cter in SUMO2) cross-link involves residue lysine 876. Position 886 is a phosphoserine (serine 886). Residues 937–962 (PSSLGGLSPSSASGGSGVVTTVTMSG) show a composition bias toward low complexity. Phosphoserine occurs at positions 1016, 1027, and 1035. Residues 1202–1215 (ELDKTDEKRTRLQQ) are compositionally biased toward basic and acidic residues. Tyrosine 1239 bears the Phosphotyrosine mark. A disordered region spans residues 1245–1288 (DTAATSTTPPGSPPPPPPLPEPPVLKILSSLKPGSTSTVTAPTT). Phosphothreonine is present on threonine 1252. A compositionally biased stretch (pro residues) spans 1254–1267 (PGSPPPPPPLPEPP). At serine 1256 the chain carries Phosphoserine. The segment covering 1279 to 1288 (STSTVTAPTT) has biased composition (low complexity). A Phosphoserine modification is found at serine 1307. Disordered stretches follow at residues 1320 to 1347 (KKSF…KGED), 1362 to 1421 (FGQF…VAYD), 1509 to 1609 (SDAL…EAKE), and 1630 to 2256 (QKCE…AAQA). A compositionally biased stretch (acidic residues) spans 1371-1387 (LEEEEEDDRPYDPEEEY). At serine 1514 the chain carries Phosphoserine. Residues 1526 to 1546 (LFSQEQQAPDPSQGAPNTNHN) show a composition bias toward polar residues. Residues 1547–1557 (LDSRQSRDPRQ) are compositionally biased toward basic and acidic residues. Over residues 1649–1666 (PTAGDGAARPAPPRRVLL) the composition is skewed to low complexity. Positions 1667–1679 (PTPPSTTFPPSFP) are enriched in pro residues. The segment covering 1699 to 1712 (TFMSQETSLGSSQY) has biased composition (polar residues). Serine 1726 bears the Phosphoserine mark. A compositionally biased stretch (pro residues) spans 1783-1792 (FPGPRGPVPP). Arginine 1848 is subject to Omega-N-methylarginine. The span at 1855–1869 (FEDRKDPHGEKREFQ) shows a compositional bias: basic and acidic residues. Asymmetric dimethylarginine occurs at positions 1904, 1905, 1988, 1993, 2004, 2019, and 2035. Basic and acidic residues-rich tracts occupy residues 2081–2113 (EFRE…KPLD) and 2123–2246 (RQGR…EART).

Interacts specifically (via PHD-type zinc finger) with histone H3 that is trimethylated at 'Lys-4' (H3K4me3), histone phosphorylation at 'Thr-3' or 'Thr-6' disrupts this binding and promotes translocation of DIDO1 from chromatin to the mitotic spindle during mitosis. Ubiquitous. Expressed at intermediate levels.

Its subcellular location is the cytoplasm. The protein localises to the nucleus. The protein resides in the cytoskeleton. It is found in the spindle. In terms of biological role, required for early embryonic stem cell development. Putative transcription factor, weakly pro-apoptotic when overexpressed. This is Death-inducer obliterator 1 (Dido1) from Mus musculus (Mouse).